We begin with the raw amino-acid sequence, 859 residues long: DNA mismatch repair protein MutS (859 aa).

617 to 624 (GPNMGGKS) lines the ATP pocket. A disordered region spans residues 799-821 (ETTSLPHEQPRAKPGKPAVPQQS).

This sequence belongs to the DNA mismatch repair MutS family.

Its function is as follows. This protein is involved in the repair of mismatches in DNA. It is possible that it carries out the mismatch recognition step. This protein has a weak ATPase activity. This Pseudomonas savastanoi pv. phaseolicola (strain 1448A / Race 6) (Pseudomonas syringae pv. phaseolicola (strain 1448A / Race 6)) protein is DNA mismatch repair protein MutS.